The primary structure comprises 1218 residues: NACHT, LRR and PYD domains-containing protein 1a allele 4 (1218 aa).

The segment covering 1–29 has biased composition (polar residues); the sequence is MGESQSKQESNTRVAQHGSQQDVDPTFQT. Disordered stretches follow at residues 1–44 and 71–91; these read MGES…QVEQ and EMDH…DRSE. The segment covering 77–87 has biased composition (basic residues); that stretch reads RRHSHQSKKKL. The NACHT domain maps to 175–484; that stretch reads QLVIIEGAAG…EFFAAMSYIL (310 aa). 181–188 contacts ATP; it reads GAAGIGKS. 3 LRR repeats span residues 343–364, 673–693, and 730–750; these read KERN…LTLC, NLEE…RSLC, and RLAE…RQLC. Over residues 799–815 the composition is skewed to polar residues; the sequence is TMPTENTDGEESLTSSK. A disordered region spans residues 799–842; the sequence is TMPTENTDGEESLTSSKQQQQQSGDKHMEPLGTDDDFWGPSGPV. Positions 835 to 968 are ZU5; that stretch reads FWGPSGPVST…HFAVLENPSF (134 aa). The FIIND domain occupies 835 to 1118; sequence FWGPSGPVST…LRPALPRMAS (284 aa). Residues 969–1118 form a UPA region; the sequence is SPMGVLLRMI…LRPALPRMAS (150 aa). The CARD domain occupies 1122 to 1211; sequence DAPALLHFVD…HLIMDLLEKS (90 aa).

Belongs to the NLRP family. Interacts (via LRR repeats) with BCL2 and BCL2L1 (via the loop between motifs BH4 and BH3). Interacts with NOD2; this interaction is enhanced in the presence of muramyl dipeptide (MDP) and increases IL1B release. Interacts with EIF2AK2/PKR; this interaction requires EIF2AK2 activity, is accompanied by EIF2AK2 autophosphorylation and promotes inflammasome assembly in response to danger-associated signals. Interacts with MEFV; this interaction targets Nlrp1a to degradation by autophagy, hence preventing excessive IL1B- and IL18-mediated inflammation. Interacts with DPP9; leading to inhibit activation of the inflammasome. DPP9 acts via formation of a ternary complex, composed of a DPP9 homodimer, one full-length NLRP1 protein, and one cleaved C-terminus of Nlrp1a (NACHT, LRR and PYD domains-containing protein 1a, C-terminus). Interacts with DPP8; leading to inhibit activation of the inflammasome, probably via formation of a ternary complex with DPP8. In terms of assembly, interacts with the C-terminal part of Nlrp1a (NACHT, LRR and PYD domains-containing protein 1a, C-terminus) in absence of pathogens and other damage-associated signals. As to quaternary structure, interacts with the N-terminal part of Nlrp1a (NACHT, LRR and PYD domains-containing protein 1a, N-terminus) in absence of pathogens and other damage-associated signals. Homomultimer; forms the Nlrp1a inflammasome polymeric complex, a filament composed of homopolymers of this form in response to pathogens and other damage-associated signals. The Nlrp1a inflammasome polymeric complex directly recruits pro-caspase-1 (proCASP1) independently of PYCARD/ASC. Interacts (via CARD domain) with CASP1 (via CARD domain); leading to CASP1 activation. Autocatalytically cleaved. Autocatalytic cleavage in FIIND region occurs constitutively, prior to activation signals, and is required for inflammasome activity (IL1B release), possibly by facilitating CASP1 binding. Both N- and C-terminal parts remain associated non-covalently. In terms of processing, ubiquitinated in response to pathogen-associated signals, leading to its degradation by the proteasome and subsequent release of the cleaved C-terminal part of the protein (NACHT, LRR and PYD domains-containing protein 1a, C-terminus), which polymerizes and forms the Nlrp1a inflammasome.

Its subcellular location is the cytoplasm. The protein resides in the cytosol. The protein localises to the nucleus. It localises to the inflammasome. Activated by pathogens and other damage-associated signals: activation promotes ubiquitination and degradation of the N-terminal part, releasing the cleaved C-terminal part of the protein (NACHT, LRR and PYD domains-containing protein 1a, C-terminus), which polymerizes and forms the Nlrp1a inflammasome. Nlrp1a inflammasome is inhibited by DPP8 and DPP9, which sequester the C-terminal fragment of Nlrp1a (NACHT, LRR and PYD domains-containing protein 1a, C-terminus) in a ternary complex, thereby preventing Nlrp1a oligomerization and activation. Nlrp1a inflammasome is strongly activated by Val-boroPro (Talabostat, PT-100), an inhibitor of dipeptidyl peptidases DPP8 and DPP9. Val-boroPro relieves inhibition of DPP8 and/or DPP9 by promoting disruption of the ternary complex, releasing its C-terminal part from autoinhibition. Not activated by cleavage by B.anthracis lethal toxin (LT) endopeptidase. Functionally, acts as the sensor component of the Nlrp1a inflammasome, which mediates inflammasome activation in response to various pathogen-associated signals, leading to subsequent pyroptosis. Inflammasomes are supramolecular complexes that assemble in the cytosol in response to pathogens and other damage-associated signals and play critical roles in innate immunity and inflammation. Acts as a recognition receptor (PRR): recognizes specific pathogens and other damage-associated signals, such as Val-boroPro inhibitor, and mediates the formation of the inflammasome polymeric complex. In response to pathogen-associated signals, the N-terminal part of Nlrp1a is degraded by the proteasome, releasing the cleaved C-terminal part of the protein (NACHT, LRR and PYD domains-containing protein 1a, C-terminus), which polymerizes to initiate the formation of the inflammasome complex: the inflammasome directly recruits pro-caspase-1 (proCASP1) independently of PYCARD/ASC and promotes caspase-1 (CASP1) activation, which subsequently cleaves and activates inflammatory cytokines IL1B and IL18 and gasdermin-D (GSDMD), leading to pyroptosis. In the absence of GSDMD expression, the Nlrp1a inflammasome is able to recruit and activate CASP8, leading to activation of gasdermin-E (GSDME). Its function is as follows. Constitutes the precursor of the Nlrp1a inflammasome, which mediates autoproteolytic processing within the FIIND domain to generate the N-terminal and C-terminal parts, which are associated non-covalently in absence of pathogens and other damage-associated signals. In terms of biological role, regulatory part that prevents formation of the Nlrp1a inflammasome: in absence of pathogens and other damage-associated signals, interacts with the C-terminal part of Nlrp1a (NACHT, LRR and PYD domains-containing protein 1a, C-terminus), preventing activation of the Nlrp1a inflammasome. In response to pathogen-associated signals, this part is ubiquitinated by the N-end rule pathway and degraded by the proteasome, releasing the cleaved C-terminal part of the protein, which polymerizes and forms the Nlrp1a inflammasome. Constitutes the active part of the Nlrp1a inflammasome. In absence of pathogens and other damage-associated signals, interacts with the N-terminal part of Nlrp1a (NACHT, LRR and PYD domains-containing protein 1a, N-terminus), preventing activation of the Nlrp1a inflammasome. In response to pathogen-associated signals, the N-terminal part of Nlrp1a is degraded by the proteasome, releasing this form, which polymerizes to form the Nlrp1a inflammasome complex: the Nlrp1a inflammasome complex then directly recruits pro-caspase-1 (proCASP1) and promotes caspase-1 (CASP1) activation, leading to gasdermin-D (GSDMD) cleavage and subsequent pyroptosis. This chain is NACHT, LRR and PYD domains-containing protein 1a allele 4, found in Rattus norvegicus (Rat).